The chain runs to 209 residues: Uracil phosphoribosyltransferase (209 aa).

5-phospho-alpha-D-ribose 1-diphosphate-binding positions include Arg79, Arg104, and 131–139; that span reads DPMLATGNS. Uracil-binding positions include Ile194 and 199 to 201; that span reads GDA. Asp200 is a 5-phospho-alpha-D-ribose 1-diphosphate binding site.

The protein belongs to the UPRTase family. It depends on Mg(2+) as a cofactor.

It catalyses the reaction UMP + diphosphate = 5-phospho-alpha-D-ribose 1-diphosphate + uracil. It functions in the pathway pyrimidine metabolism; UMP biosynthesis via salvage pathway; UMP from uracil: step 1/1. Its activity is regulated as follows. Allosterically activated by GTP. In terms of biological role, catalyzes the conversion of uracil and 5-phospho-alpha-D-ribose 1-diphosphate (PRPP) to UMP and diphosphate. This Acidovorax sp. (strain JS42) protein is Uracil phosphoribosyltransferase.